Consider the following 63-residue polypeptide: Keratin-associated protein 8-1 (63 aa).

The segment at 12 to 54 is 12 X 2 AA repeats of G-[YCGS]; sequence PGCYWGSYGYPLGYSVGCGYGSTYSPVGYGFGYGYNGCGAFGY.

The protein belongs to the KRTAP type 8 family. Interacts with hair keratins. As to expression, is essentially restricted to only one vertical half of the hair forming compartment and in beard hairs is absent from the central medulla.

In terms of biological role, in the hair cortex, hair keratin intermediate filaments are embedded in an interfilamentous matrix, consisting of hair keratin-associated proteins (KRTAP), which are essential for the formation of a rigid and resistant hair shaft through their extensive disulfide bond cross-linking with abundant cysteine residues of hair keratins. The matrix proteins include the high-sulfur and high-glycine-tyrosine keratins. This Homo sapiens (Human) protein is Keratin-associated protein 8-1 (KRTAP8-1).